The following is a 354-amino-acid chain: MATGGGRAFAWQVFPPMPTCRVYGTVAFQDGHLLVLGGCGRAGLPLDTAETLDMASHTWVALAPLPTARAGAAAVVLGKQVLVVGGVDEGQSPVAAVEAFLADEGRWERRATLPQAAMGVATVERDGMVYALGGMGPDTAPQAQVRVYEPRRDCWLSLPSMPTPCYGASTFLHGNKIYVLGGRQGKLPVTAFEAFDLEARTWTRHPSLPSRRAFAGCAMAEGSVFSLGGLQQPGPHNFYSRPHFVNTVEMFDLEHGSWTKLPRSLRMRDKRADFVVGSLGDHVVAIGGLGNQPCPLGSVEGFGLARRRWEALPAMPTARCSCSSLQAGPRLFAIGGVAQGPSQAVEALCLRDGV.

Kelch repeat units lie at residues 1–31 (MATG…FQDG), 32–79 (HLLV…VLGK), 81–127 (VLVV…ERDG), 128–175 (MVYA…LHGN), 176–222 (KIYV…MAEG), 224–281 (VFSL…SLGD), 282–329 (HVVA…QAGP), and 331–354 (LFAI…RDGV).

The protein localises to the cytoplasm. The protein resides in the midbody. In terms of biological role, involved in pinching off the separated nuclei at the cleavage furrow and in cytokinesis. Required for mitotic integrity and maintenance of chromosomal stability. Protects cells against mitotic errors, centrosomal amplification, micronucleus formation and aneuploidy. Plays a key role of midbody function involving abscission of the daughter cells during cytokinesis and appropriate chromosomal and nuclear segregation into the daughter cells. In Bos taurus (Bovine), this protein is Kelch domain-containing protein 8B (KLHDC8B).